The primary structure comprises 1571 residues: Pentafunctional AROM polypeptide (1571 aa).

Positions 1–380 are 3-dehydroquinate synthase; sequence MTSVEKVSIL…YQLKAHQVSK (380 aa). NAD(+) is bound by residues 43–45, 81–84, 112–114, and Asp-117; these read DTN, ENNK, and GGV. Arg-128 lines the 7-phospho-2-dehydro-3-deoxy-D-arabino-heptonate pocket. 137-138 contacts NAD(+); it reads TS. 7-phospho-2-dehydro-3-deoxy-D-arabino-heptonate contacts are provided by Asp-144 and Lys-150. Lys-159 contacts NAD(+). Asn-160 lines the 7-phospho-2-dehydro-3-deoxy-D-arabino-heptonate pocket. NAD(+)-binding positions include 177–180 and Asn-188; that span reads FLET. Glu-192 contacts Zn(2+). Residues 192–195 and Lys-244 contribute to the 7-phospho-2-dehydro-3-deoxy-D-arabino-heptonate site; that span reads EVVK. Glu-254 functions as the Proton acceptor; for 3-dehydroquinate synthase activity in the catalytic mechanism. Residues 258-262 and His-265 contribute to the 7-phospho-2-dehydro-3-deoxy-D-arabino-heptonate site; that span reads RNLLN. His-265 lines the Zn(2+) pocket. His-269 acts as the Proton acceptor; for 3-dehydroquinate synthase activity in catalysis. The 7-phospho-2-dehydro-3-deoxy-D-arabino-heptonate site is built by His-281 and Lys-352. His-281 lines the Zn(2+) pocket. The EPSP synthase stretch occupies residues 393–843; it reads VHPFDDKLIP…WDILHTKFKV (451 aa). Cys-825 acts as the For EPSP synthase activity in catalysis. Positions 868-1058 are shikimate kinase; the sequence is KRSIIVIGMR…IPKKRSFYTS (191 aa). 875 to 882 lines the ATP pocket; the sequence is GMRGAGKS. The 3-dehydroquinase stretch occupies residues 1059-1271; it reads LTFSDLTEVA…GNEGALDVAQ (213 aa). The Schiff-base intermediate with substrate; for 3-dehydroquinate dehydratase activity role is filled by Lys-1204. Residues 1284 to 1571 are shikimate dehydrogenase; that stretch reads EKHFWIVGNP…DVVHDAVVNQ (288 aa).

In the N-terminal section; belongs to the sugar phosphate cyclases superfamily. Dehydroquinate synthase family. This sequence in the 2nd section; belongs to the EPSP synthase family. The protein in the 3rd section; belongs to the shikimate kinase family. It in the 4th section; belongs to the type-I 3-dehydroquinase family. In the C-terminal section; belongs to the shikimate dehydrogenase family. In terms of assembly, homodimer. It depends on Zn(2+) as a cofactor.

Its subcellular location is the cytoplasm. The catalysed reaction is 7-phospho-2-dehydro-3-deoxy-D-arabino-heptonate = 3-dehydroquinate + phosphate. It carries out the reaction 3-dehydroquinate = 3-dehydroshikimate + H2O. It catalyses the reaction shikimate + NADP(+) = 3-dehydroshikimate + NADPH + H(+). The enzyme catalyses shikimate + ATP = 3-phosphoshikimate + ADP + H(+). The catalysed reaction is 3-phosphoshikimate + phosphoenolpyruvate = 5-O-(1-carboxyvinyl)-3-phosphoshikimate + phosphate. Its pathway is metabolic intermediate biosynthesis; chorismate biosynthesis; chorismate from D-erythrose 4-phosphate and phosphoenolpyruvate: step 2/7. It participates in metabolic intermediate biosynthesis; chorismate biosynthesis; chorismate from D-erythrose 4-phosphate and phosphoenolpyruvate: step 3/7. It functions in the pathway metabolic intermediate biosynthesis; chorismate biosynthesis; chorismate from D-erythrose 4-phosphate and phosphoenolpyruvate: step 4/7. The protein operates within metabolic intermediate biosynthesis; chorismate biosynthesis; chorismate from D-erythrose 4-phosphate and phosphoenolpyruvate: step 5/7. Its pathway is metabolic intermediate biosynthesis; chorismate biosynthesis; chorismate from D-erythrose 4-phosphate and phosphoenolpyruvate: step 6/7. Functionally, the AROM polypeptide catalyzes 5 consecutive enzymatic reactions in prechorismate polyaromatic amino acid biosynthesis. This chain is Pentafunctional AROM polypeptide, found in Scheffersomyces stipitis (strain ATCC 58785 / CBS 6054 / NBRC 10063 / NRRL Y-11545) (Yeast).